Consider the following 354-residue polypeptide: MSYGSCVSRLLRTRVQSVLKKSVHSVAVIGAPFSQGQKRKGVECGPAAIRDAGLVKRLSDLGCRLKDYGDLSFTPVPKDDLYNNLIVNPRSVGLANQELAEVVNRAVSGGYSCVTVGGDHSLAIGTISGHARHCPDLCVVWVDAHADINTPLTTSSGNLHGQPVSFLLRELQDKVPQLPGFSWIKPCISSPSIVYIGLRDVDPPEHFILKKYDIQYFSMRDIDRLGIQKVMEQTFDLLIGKKQRPIHLSFDIDAFDPTLAPATGTPGCGGADLSRRMYISEEIHNTGLLSALDLVEVNPRLAASDEEAKATASLAVDVIASSFGQTREGGHTVYEQLPPPSSPHESENAERVRI.

Residues 1 to 22 (MSYGSCVSRLLRTRVQSVLKKS) constitute a mitochondrion transit peptide. His-120, Asp-143, His-145, and Asp-147 together coordinate Mn(2+). Substrate contacts are provided by residues 145–149 (HADIN), 156–158 (SGN), and Asp-202. Mn(2+) contacts are provided by Asp-251 and Asp-253. Residues Thr-265 and Glu-296 each contribute to the substrate site. The tract at residues 330-354 (GHTVYEQLPPPSSPHESENAERVRI) is disordered. Residues 344 to 354 (HESENAERVRI) are compositionally biased toward basic and acidic residues.

It belongs to the arginase family. In terms of assembly, homotrimer. It depends on Mn(2+) as a cofactor.

It is found in the mitochondrion. The catalysed reaction is L-arginine + H2O = urea + L-ornithine. It functions in the pathway nitrogen metabolism; urea cycle; L-ornithine and urea from L-arginine: step 1/1. Functionally, may play a role in the regulation of extra-urea cycle arginine metabolism and also in down-regulation of nitric oxide synthesis. Extrahepatic arginase functions to regulate L-arginine bioavailability to nitric oxid synthase (NOS). Arginine metabolism is a critical regulator of innate and adaptive immune responses. Seems to be involved in negative regulation of the survival capacity of activated T cells. May suppress inflammation-related signaling in asthmatic airway epithelium. May play a role in promoting prenatal immune suppression. Regulates RPS6KB1 signaling, which promotes endothelial cell senescence and inflammation and implicates NOS3/eNOS dysfunction. Can inhibit endothelial autophagy independently of its enzymatic activity implicating mTORC2 signaling. Involved in vascular smooth muscle cell senescence and apoptosis independently of its enzymatic activity. The polypeptide is Arginase-2, mitochondrial (ARG2) (Oryctolagus cuniculus (Rabbit)).